The chain runs to 338 residues: 1-aminocyclopropane-1-carboxylate deaminase (338 aa).

At lysine 51 the chain carries N6-(pyridoxal phosphate)lysine. The Nucleophile role is filled by serine 78.

Belongs to the ACC deaminase/D-cysteine desulfhydrase family. As to quaternary structure, homotrimer. Pyridoxal 5'-phosphate is required as a cofactor.

The enzyme catalyses 1-aminocyclopropane-1-carboxylate + H2O = 2-oxobutanoate + NH4(+). Functionally, catalyzes a cyclopropane ring-opening reaction, the irreversible conversion of 1-aminocyclopropane-1-carboxylate (ACC) to ammonia and alpha-ketobutyrate. Allows growth on ACC as a nitrogen source. The polypeptide is 1-aminocyclopropane-1-carboxylate deaminase (Paracidovorax citrulli (strain AAC00-1) (Acidovorax citrulli)).